Here is a 233-residue protein sequence, read N- to C-terminus: Large ribosomal subunit protein uL1 (233 aa).

It belongs to the universal ribosomal protein uL1 family. Part of the 50S ribosomal subunit.

Its function is as follows. Binds directly to 23S rRNA. The L1 stalk is quite mobile in the ribosome, and is involved in E site tRNA release. In terms of biological role, protein L1 is also a translational repressor protein, it controls the translation of the L11 operon by binding to its mRNA. This chain is Large ribosomal subunit protein uL1, found in Zymomonas mobilis subsp. mobilis (strain ATCC 31821 / ZM4 / CP4).